We begin with the raw amino-acid sequence, 472 residues long: Protein nucleotidyltransferase YdiU (472 aa).

The ATP site is built by glycine 86, glycine 88, arginine 89, lysine 109, aspartate 121, glycine 122, arginine 172, and arginine 179. Catalysis depends on aspartate 244, which acts as the Proton acceptor. Asparagine 245 and aspartate 254 together coordinate Mg(2+). An ATP-binding site is contributed by aspartate 254.

This sequence belongs to the SELO family. The cofactor is Mg(2+). Requires Mn(2+) as cofactor.

It carries out the reaction L-seryl-[protein] + ATP = 3-O-(5'-adenylyl)-L-seryl-[protein] + diphosphate. The enzyme catalyses L-threonyl-[protein] + ATP = 3-O-(5'-adenylyl)-L-threonyl-[protein] + diphosphate. The catalysed reaction is L-tyrosyl-[protein] + ATP = O-(5'-adenylyl)-L-tyrosyl-[protein] + diphosphate. It catalyses the reaction L-histidyl-[protein] + UTP = N(tele)-(5'-uridylyl)-L-histidyl-[protein] + diphosphate. It carries out the reaction L-seryl-[protein] + UTP = O-(5'-uridylyl)-L-seryl-[protein] + diphosphate. The enzyme catalyses L-tyrosyl-[protein] + UTP = O-(5'-uridylyl)-L-tyrosyl-[protein] + diphosphate. In terms of biological role, nucleotidyltransferase involved in the post-translational modification of proteins. It can catalyze the addition of adenosine monophosphate (AMP) or uridine monophosphate (UMP) to a protein, resulting in modifications known as AMPylation and UMPylation. The sequence is that of Protein nucleotidyltransferase YdiU from Ruegeria sp. (strain TM1040) (Silicibacter sp.).